The primary structure comprises 151 residues: U1 small nuclear ribonucleoprotein C (151 aa).

A Matrin-type zinc finger spans residues 4–36 (FYCEYCSIYLTHSSPAGRKQHSQGRKHISAKVE).

It belongs to the U1 small nuclear ribonucleoprotein C family. As to quaternary structure, U1 snRNP is composed of the 7 core Sm proteins B/B', D1, D2, D3, E, F and G that assemble in a heptameric protein ring on the Sm site of the small nuclear RNA to form the core snRNP, and at least 3 U1 snRNP-specific proteins U1-70K, U1-A and U1-C. U1-C interacts with U1 snRNA and the 5' splice-site region of the pre-mRNA.

It localises to the nucleus. Component of the spliceosomal U1 snRNP, which is essential for recognition of the pre-mRNA 5' splice-site and the subsequent assembly of the spliceosome. U1-C is directly involved in initial 5' splice-site recognition for both constitutive and regulated alternative splicing. The interaction with the 5' splice-site seems to precede base-pairing between the pre-mRNA and the U1 snRNA. Stimulates commitment or early (E) complex formation by stabilizing the base pairing of the 5' end of the U1 snRNA and the 5' splice-site region. The protein is U1 small nuclear ribonucleoprotein C of Theileria annulata.